Here is a 241-residue protein sequence, read N- to C-terminus: Uridylate kinase (241 aa).

12–15 (KVSG) contributes to the ATP binding site. Positions 20-25 (GEKGTG) are involved in allosteric activation by GTP. Glycine 54 provides a ligand contact to UMP. Positions 55 and 59 each coordinate ATP. Residues aspartate 74 and 135 to 142 (TGNPYFST) contribute to the UMP site. Asparagine 163, tyrosine 169, and aspartate 172 together coordinate ATP.

This sequence belongs to the UMP kinase family. In terms of assembly, homohexamer.

It is found in the cytoplasm. The catalysed reaction is UMP + ATP = UDP + ADP. It functions in the pathway pyrimidine metabolism; CTP biosynthesis via de novo pathway; UDP from UMP (UMPK route): step 1/1. Allosterically activated by GTP. Inhibited by UTP. In terms of biological role, catalyzes the reversible phosphorylation of UMP to UDP. In Lactobacillus johnsonii (strain CNCM I-12250 / La1 / NCC 533), this protein is Uridylate kinase.